The following is a 363-amino-acid chain: MKRTPLYERHVALGAKMVDFAGWIMPLYYSSIFEEVMAVRKSVGVFDVSHMGEIVVEGQETVDFVNFLVTNDFSAIPEGKAMYTVMCNETGGIVDDLVVYRISHEKAIMVVNAANIEKDYEWIKVHAKNFNVEVRNVSDETALVAFQGPKSQETLQRVVDIDLEGIGYYSFQWGRLDGERVLVSRTGYTGEDGFELMMNAESAAKIWDTLVEIAGNVDGKPAGLGARDVCRLEASYLLYGQDMDESTNPFEVGLSWVVKMNKDFVGKEALLKLKEKVERKLVALELSGRRIARKGYTVLKEGKEVGKITSGNFSPTLGKSIALALVSRCVKTGDRLEVVFPGKNVEAHVVKKPFYRGSVRREA.

It belongs to the GcvT family. In terms of assembly, the glycine cleavage system is composed of four proteins: P, T, L and H.

It carries out the reaction N(6)-[(R)-S(8)-aminomethyldihydrolipoyl]-L-lysyl-[protein] + (6S)-5,6,7,8-tetrahydrofolate = N(6)-[(R)-dihydrolipoyl]-L-lysyl-[protein] + (6R)-5,10-methylene-5,6,7,8-tetrahydrofolate + NH4(+). In terms of biological role, the glycine cleavage system catalyzes the degradation of glycine. The polypeptide is Aminomethyltransferase (Thermotoga neapolitana (strain ATCC 49049 / DSM 4359 / NBRC 107923 / NS-E)).